The primary structure comprises 70 residues: Putative peptide YY-3 (70 aa).

Positions 1–23 (MVSVCRPWPAVAIALLALLVCLG) are cleaved as a signal peptide.

The protein belongs to the NPY family.

Its subcellular location is the secreted. The protein is Putative peptide YY-3 (PYY3) of Homo sapiens (Human).